The primary structure comprises 743 residues: DNA ligase 2 (743 aa).

NAD(+) contacts are provided by residues 45 to 49 (DADFD), 94 to 95 (SL), and glutamate 125. The active-site N6-AMP-lysine intermediate is lysine 127. The NAD(+) site is built by arginine 148, glutamate 185, lysine 301, and lysine 325. Cysteine 419, cysteine 422, cysteine 438, and cysteine 444 together coordinate Zn(2+). The region spanning 639 to 728 (EGPRPLEGLT…PERAKEAALP (90 aa)) is the BRCT domain. The segment at 720-743 (ERAKEAALPVPEAAPAADPENSGE) is disordered. Positions 725-743 (AALPVPEAAPAADPENSGE) are enriched in low complexity.

Belongs to the NAD-dependent DNA ligase family. LigA subfamily. Requires Mg(2+) as cofactor. Mn(2+) serves as cofactor.

It carries out the reaction NAD(+) + (deoxyribonucleotide)n-3'-hydroxyl + 5'-phospho-(deoxyribonucleotide)m = (deoxyribonucleotide)n+m + AMP + beta-nicotinamide D-nucleotide.. DNA ligase that catalyzes the formation of phosphodiester linkages between 5'-phosphoryl and 3'-hydroxyl groups in double-stranded DNA using NAD as a coenzyme and as the energy source for the reaction. It is essential for DNA replication and repair of damaged DNA. The chain is DNA ligase 2 from Streptomyces griseus subsp. griseus (strain JCM 4626 / CBS 651.72 / NBRC 13350 / KCC S-0626 / ISP 5235).